A 419-amino-acid polypeptide reads, in one-letter code: Arginine biosynthesis bifunctional protein ArgJ (419 aa).

Substrate-binding residues include Thr-154, Lys-180, Thr-191, Glu-277, Asn-414, and Thr-419. The Nucleophile role is filled by Thr-191.

Belongs to the ArgJ family. As to quaternary structure, heterotetramer of two alpha and two beta chains.

Its subcellular location is the cytoplasm. It carries out the reaction N(2)-acetyl-L-ornithine + L-glutamate = N-acetyl-L-glutamate + L-ornithine. It catalyses the reaction L-glutamate + acetyl-CoA = N-acetyl-L-glutamate + CoA + H(+). Its pathway is amino-acid biosynthesis; L-arginine biosynthesis; L-ornithine and N-acetyl-L-glutamate from L-glutamate and N(2)-acetyl-L-ornithine (cyclic): step 1/1. The protein operates within amino-acid biosynthesis; L-arginine biosynthesis; N(2)-acetyl-L-ornithine from L-glutamate: step 1/4. Catalyzes two activities which are involved in the cyclic version of arginine biosynthesis: the synthesis of N-acetylglutamate from glutamate and acetyl-CoA as the acetyl donor, and of ornithine by transacetylation between N(2)-acetylornithine and glutamate. The polypeptide is Arginine biosynthesis bifunctional protein ArgJ (Thermosynechococcus vestitus (strain NIES-2133 / IAM M-273 / BP-1)).